The chain runs to 410 residues: Multidrug transporter MdfA (410 aa).

The Cytoplasmic segment spans residues 1–15 (MQNKLASGARLGRQA). Residues 16–36 (LLFPLCLVLYEFSTYIGNDMI) form a helical membrane-spanning segment. Over 37-52 (QPGMLAVVEQYQAGID) the chain is Periplasmic. The helical transmembrane segment at 53–73 (WVPTSMTAYLAGGMFLQWLLG) threads the bilayer. At 74 to 82 (PLSDRIGRR) the chain is on the cytoplasmic side. Residues 83-103 (PVMLAGVVWFIVTCLAILLAQ) form a helical membrane-spanning segment. The Periplasmic segment spans residues 104–109 (NIEQFT). The helical transmembrane segment at 110 to 130 (LLRFLQGISLCFIGAVGYAAI) threads the bilayer. The Cytoplasmic portion of the chain corresponds to 131–144 (QESFEEAVCIKITA). Residues 145-165 (LMANVALIAPLLGPLVGAAWI) form a helical membrane-spanning segment. H166 is a topological domain (periplasmic). Residues 167–187 (VLPWEGMFVLFAALAAISFFG) traverse the membrane as a helical segment. Residues 188 to 226 (LQRAMPETATRIGEKLSLKELGRDYKLVLKNGRFVAGAL) are Cytoplasmic-facing. The chain crosses the membrane as a helical span at residues 227-247 (ALGFVSLPLLAWIAQSPIIII). Residues 248-255 (TGEQLSSY) are Periplasmic-facing. The chain crosses the membrane as a helical span at residues 256–276 (EYGLLQVPIFGALIAGNLLLA). The Cytoplasmic segment spans residues 277–287 (RLTSRRTVRSL). A helical membrane pass occupies residues 288–308 (IIMGGWPIMIGLLVAAAATVI). Topologically, residues 309-314 (SSHAYL) are periplasmic. Residues 315 to 335 (WMTAGLSIYAFGIGLANAGLV) traverse the membrane as a helical segment. The Cytoplasmic portion of the chain corresponds to 336-346 (RLTLFASDMSK). The helical transmembrane segment at 347 to 367 (GTVSAAMGMLQMLIFTVGIEI) threads the bilayer. Residues 368 to 378 (SKHAWLNGGNG) lie on the Periplasmic side of the membrane. The chain crosses the membrane as a helical span at residues 379–399 (LFNLFNLVNGILWLSLMVIFL). The Cytoplasmic segment spans residues 400-410 (KDKQMGNSHEG).

The protein belongs to the major facilitator superfamily. MdfA family. Monomer.

The protein resides in the cell inner membrane. In terms of biological role, efflux pump driven by the proton motive force. Confers resistance to a broad spectrum of chemically unrelated drugs. The protein is Multidrug transporter MdfA (mdfA) of Escherichia coli O6:H1 (strain CFT073 / ATCC 700928 / UPEC).